The sequence spans 390 residues: Dual-specificity RNA methyltransferase RlmN (390 aa).

Glu-111 (proton acceptor) is an active-site residue. The 240-residue stretch at 117 to 356 folds into the Radical SAM core domain; it reads EDDRATLCVS…VIVRKTRGDD (240 aa). Cys-124 and Cys-361 are disulfide-bonded. [4Fe-4S] cluster contacts are provided by Cys-131, Cys-135, and Cys-138. S-adenosyl-L-methionine-binding positions include 185–186, Ser-217, 239–241, and Asn-318; these read GE and SLH. Catalysis depends on Cys-361, which acts as the S-methylcysteine intermediate.

This sequence belongs to the radical SAM superfamily. RlmN family. Requires [4Fe-4S] cluster as cofactor.

The protein resides in the cytoplasm. It catalyses the reaction adenosine(2503) in 23S rRNA + 2 reduced [2Fe-2S]-[ferredoxin] + 2 S-adenosyl-L-methionine = 2-methyladenosine(2503) in 23S rRNA + 5'-deoxyadenosine + L-methionine + 2 oxidized [2Fe-2S]-[ferredoxin] + S-adenosyl-L-homocysteine. It carries out the reaction adenosine(37) in tRNA + 2 reduced [2Fe-2S]-[ferredoxin] + 2 S-adenosyl-L-methionine = 2-methyladenosine(37) in tRNA + 5'-deoxyadenosine + L-methionine + 2 oxidized [2Fe-2S]-[ferredoxin] + S-adenosyl-L-homocysteine. Functionally, specifically methylates position 2 of adenine 2503 in 23S rRNA and position 2 of adenine 37 in tRNAs. m2A2503 modification seems to play a crucial role in the proofreading step occurring at the peptidyl transferase center and thus would serve to optimize ribosomal fidelity. The polypeptide is Dual-specificity RNA methyltransferase RlmN (Edwardsiella ictaluri (strain 93-146)).